We begin with the raw amino-acid sequence, 391 residues long: 3-ketoacyl-CoA thiolase (391 aa).

Cysteine 95 (acyl-thioester intermediate) is an active-site residue. Active-site proton acceptor residues include histidine 347 and cysteine 377.

The protein belongs to the thiolase-like superfamily. Thiolase family. As to quaternary structure, heterotetramer of two alpha chains (FadB) and two beta chains (FadA).

The protein resides in the cytoplasm. The enzyme catalyses an acyl-CoA + acetyl-CoA = a 3-oxoacyl-CoA + CoA. Its pathway is lipid metabolism; fatty acid beta-oxidation. In terms of biological role, catalyzes the final step of fatty acid oxidation in which acetyl-CoA is released and the CoA ester of a fatty acid two carbons shorter is formed. This Pseudomonas syringae pv. tomato (strain ATCC BAA-871 / DC3000) protein is 3-ketoacyl-CoA thiolase.